The following is a 267-amino-acid chain: Ras-related protein Rab-36 (267 aa).

GTP-binding residues include V68, G69, K70, T71, S72, D83, Y86, and T89. Position 71 (T71) interacts with Mg(2+). The Switch 1 signature appears at 76 to 94 (RFCKNVFDRDYKATIGVDF). The Mg(2+) site is built by T89 and D112. A Switch 2 motif is present at residues 113–132 (TAGQEKFKCIASAYYRGAQV). GTP contacts are provided by G115, K172, D174, S203, A204, and K205. The tract at residues 243-267 (GDLIQMEGSPPETQESKRPSSLGCC) is disordered. 2 S-geranylgeranyl cysteine lipidation sites follow: C266 and C267.

Belongs to the small GTPase superfamily. Rab family. It depends on Mg(2+) as a cofactor. Ubiquitously present in all tissues examined.

It is found in the golgi apparatus membrane. It carries out the reaction GTP + H2O = GDP + phosphate + H(+). Regulated by guanine nucleotide exchange factors (GEFs) which promote the exchange of bound GDP for free GTP. Regulated by GTPase activating proteins (GAPs) which increase the GTP hydrolysis activity. Inhibited by GDP dissociation inhibitors (GDIs). Functionally, the small GTPases Rab are key regulators of intracellular membrane trafficking, from the formation of transport vesicles to their fusion with membranes. Rabs cycle between an inactive GDP-bound form and an active GTP-bound form that is able to recruit to membranes different sets of downstream effectors directly responsible for vesicle formation, movement, tethering and fusion. This Homo sapiens (Human) protein is Ras-related protein Rab-36.